Here is a 258-residue protein sequence, read N- to C-terminus: Tryptophan synthase alpha chain (258 aa).

Residues Glu-47 and Asp-58 each act as proton acceptor in the active site.

The protein belongs to the TrpA family. Tetramer of two alpha and two beta chains.

It carries out the reaction (1S,2R)-1-C-(indol-3-yl)glycerol 3-phosphate + L-serine = D-glyceraldehyde 3-phosphate + L-tryptophan + H2O. It functions in the pathway amino-acid biosynthesis; L-tryptophan biosynthesis; L-tryptophan from chorismate: step 5/5. Its function is as follows. The alpha subunit is responsible for the aldol cleavage of indoleglycerol phosphate to indole and glyceraldehyde 3-phosphate. The sequence is that of Tryptophan synthase alpha chain from Bacillus cereus (strain B4264).